We begin with the raw amino-acid sequence, 491 residues long: UDP-N-acetylmuramate--L-alanine ligase (491 aa).

Residue 126 to 132 (GTHGKTT) coordinates ATP.

It belongs to the MurCDEF family.

The protein resides in the cytoplasm. It carries out the reaction UDP-N-acetyl-alpha-D-muramate + L-alanine + ATP = UDP-N-acetyl-alpha-D-muramoyl-L-alanine + ADP + phosphate + H(+). The protein operates within cell wall biogenesis; peptidoglycan biosynthesis. Its function is as follows. Cell wall formation. The sequence is that of UDP-N-acetylmuramate--L-alanine ligase from Enterobacter sp. (strain 638).